A 156-amino-acid chain; its full sequence is 6,7-dimethyl-8-ribityllumazine synthase (156 aa).

Residues Trp-22, 56 to 58 (AYE), and 80 to 82 (AVI) contribute to the 5-amino-6-(D-ribitylamino)uracil site. 85–86 (DT) contacts (2S)-2-hydroxy-3-oxobutyl phosphate. His-88 acts as the Proton donor in catalysis. Phe-113 provides a ligand contact to 5-amino-6-(D-ribitylamino)uracil. Arg-127 contributes to the (2S)-2-hydroxy-3-oxobutyl phosphate binding site.

The protein belongs to the DMRL synthase family.

It carries out the reaction (2S)-2-hydroxy-3-oxobutyl phosphate + 5-amino-6-(D-ribitylamino)uracil = 6,7-dimethyl-8-(1-D-ribityl)lumazine + phosphate + 2 H2O + H(+). The protein operates within cofactor biosynthesis; riboflavin biosynthesis; riboflavin from 2-hydroxy-3-oxobutyl phosphate and 5-amino-6-(D-ribitylamino)uracil: step 1/2. Its function is as follows. Catalyzes the formation of 6,7-dimethyl-8-ribityllumazine by condensation of 5-amino-6-(D-ribitylamino)uracil with 3,4-dihydroxy-2-butanone 4-phosphate. This is the penultimate step in the biosynthesis of riboflavin. This is 6,7-dimethyl-8-ribityllumazine synthase from Deinococcus deserti (strain DSM 17065 / CIP 109153 / LMG 22923 / VCD115).